The sequence spans 816 residues: Cation/H(+) antiporter 8 (816 aa).

12 consecutive transmembrane segments (helical) span residues 64–84, 97–117, 127–147, 163–183, 197–214, 227–247, 255–275, 297–317, 343–363, 382–402, 413–433, and 447–467; these read PKLE…NILF, MMLA…NSII, IDVA…LKGV, VTGV…FNLK, VMLL…ARLL, VALS…IANV, ADGL…FAVV, IHGV…LSQF, LESF…MLRT, FAVA…SVIV, SIIL…FYLF, and ILVL…GFLY.

The protein belongs to the monovalent cation:proton antiporter 2 (CPA2) transporter (TC 2.A.37) family. CHX (TC 2.A.37.4) subfamily. In terms of tissue distribution, specifically expressed in pollen.

The protein localises to the membrane. May operate as a cation/H(+) antiporter. This Arabidopsis thaliana (Mouse-ear cress) protein is Cation/H(+) antiporter 8 (CHX8).